Consider the following 426-residue polypeptide: Serine hydroxymethyltransferase 1 (426 aa).

(6S)-5,6,7,8-tetrahydrofolate-binding positions include L121 and 125 to 127; that span reads GHL. K230 carries the N6-(pyridoxal phosphate)lysine modification. 355–357 is a (6S)-5,6,7,8-tetrahydrofolate binding site; it reads SPF.

It belongs to the SHMT family. As to quaternary structure, homodimer. Pyridoxal 5'-phosphate is required as a cofactor.

It is found in the cytoplasm. It catalyses the reaction (6R)-5,10-methylene-5,6,7,8-tetrahydrofolate + glycine + H2O = (6S)-5,6,7,8-tetrahydrofolate + L-serine. The protein operates within one-carbon metabolism; tetrahydrofolate interconversion. Its pathway is amino-acid biosynthesis; glycine biosynthesis; glycine from L-serine: step 1/1. Its function is as follows. Catalyzes the reversible interconversion of serine and glycine with tetrahydrofolate (THF) serving as the one-carbon carrier. This reaction serves as the major source of one-carbon groups required for the biosynthesis of purines, thymidylate, methionine, and other important biomolecules. Also exhibits THF-independent aldolase activity toward beta-hydroxyamino acids, producing glycine and aldehydes, via a retro-aldol mechanism. The chain is Serine hydroxymethyltransferase 1 from Hahella chejuensis (strain KCTC 2396).